We begin with the raw amino-acid sequence, 286 residues long: Bifunctional protein FolD 2 (286 aa).

NADP(+) is bound by residues 165–167 (GRG), Thr192, and Ile233.

Belongs to the tetrahydrofolate dehydrogenase/cyclohydrolase family. As to quaternary structure, homodimer.

It catalyses the reaction (6R)-5,10-methylene-5,6,7,8-tetrahydrofolate + NADP(+) = (6R)-5,10-methenyltetrahydrofolate + NADPH. It carries out the reaction (6R)-5,10-methenyltetrahydrofolate + H2O = (6R)-10-formyltetrahydrofolate + H(+). The protein operates within one-carbon metabolism; tetrahydrofolate interconversion. In terms of biological role, catalyzes the oxidation of 5,10-methylenetetrahydrofolate to 5,10-methenyltetrahydrofolate and then the hydrolysis of 5,10-methenyltetrahydrofolate to 10-formyltetrahydrofolate. In Salinispora tropica (strain ATCC BAA-916 / DSM 44818 / JCM 13857 / NBRC 105044 / CNB-440), this protein is Bifunctional protein FolD 2.